A 65-amino-acid chain; its full sequence is Prokaryotic ubiquitin-like protein UBact (65 aa).

Residues 1 to 17 show a composition bias toward polar residues; sequence MEVNMPTTEQGQKNKQM. A disordered region spans residues 1 to 65; that stretch reads MEVNMPTTEQ…ARRYRQRTGE (65 aa). Over residues 35–65 the composition is skewed to basic and acidic residues; that stretch reads KVEKPNTEEILKRMRKVDPDQARRYRQRTGE. An Isoglutamyl lysine isopeptide (Glu-Lys) (interchain with K-? in acceptor proteins) cross-link involves residue Glu65.

It belongs to the ubiquitin-like protein UBact family.

Its function is as follows. May function as a protein modifier covalently attached to lysine residues of substrate proteins. This may serve to target the modified proteins for degradation by proteasomes. The sequence is that of Prokaryotic ubiquitin-like protein UBact from Methylacidiphilum infernorum (isolate V4) (Methylokorus infernorum (strain V4)).